A 764-amino-acid polypeptide reads, in one-letter code: DNA replication regulator DPB11 (764 aa).

3 consecutive BRCT domains span residues 1–99, 129–220, and 322–418; these read MKPF…MTGS, TNIT…PYYL, and NSTL…DLWS. Disordered regions lie at residues 651–675 and 710–764; these read ETDSGRKKRSVSSSIMDVSSERQMP and TEQP…ELDS. A compositionally biased stretch (basic and acidic residues) spans 739 to 751; sequence QDKKRTASLEKPM.

Interacts with SLD2.

It is found in the nucleus. Its function is as follows. Has a role in the initiation of DNA replication. Required at S-phase checkpoint. Required for the association of PSF1 with origins. Also required for the proper activation of RAD53 in response to DNA damage and replication blocks. Multicopy suppressor of DPB2 mutation. Overexpression restores the growth defect conferred by POL2 mutation. The sequence is that of DNA replication regulator DPB11 (DPB11) from Saccharomyces cerevisiae (strain ATCC 204508 / S288c) (Baker's yeast).